Here is a 493-residue protein sequence, read N- to C-terminus: Mitochondrial distribution and morphology protein 10 (493 aa).

It belongs to the MDM10 family. In terms of assembly, component of the ER-mitochondria encounter structure (ERMES) or MDM complex, composed of MMM1, MDM10, MDM12 and MDM34. Associates with the mitochondrial outer membrane sorting assembly machinery SAM(core) complex, which consists of SAM35, SAM37 and SAM50, to form a SAM(holo) complex.

The protein localises to the mitochondrion outer membrane. Component of the ERMES/MDM complex, which serves as a molecular tether to connect the endoplasmic reticulum and mitochondria. Components of this complex are involved in the control of mitochondrial shape and protein biogenesis and may function in phospholipid exchange. MDM10 is involved in the late assembly steps of the general translocase of the mitochondrial outer membrane (TOM complex). Functions in the TOM40-specific route of the assembly of outer membrane beta-barrel proteins, including the association of TOM40 with the receptor TOM22 and small TOM proteins. Can associate with the SAM(core) complex as well as the MDM12-MMM1 complex, both involved in late steps of the major beta-barrel assembly pathway, that is responsible for biogenesis of all outer membrane beta-barrel proteins. May act as a switch that shuttles between both complexes and channels precursor proteins into the TOM40-specific pathway. Plays a role in mitochondrial morphology and in the inheritance of mitochondria. The sequence is that of Mitochondrial distribution and morphology protein 10 from Saccharomyces cerevisiae (strain YJM789) (Baker's yeast).